A 469-amino-acid polypeptide reads, in one-letter code: Tetratricopeptide repeat protein 38 (469 aa).

TPR repeat units lie at residues 107–140 (REML…HPTD), 179–212 (SYVK…DQTD), and 251–284 (CHVY…QCFA).

It belongs to the TTC38 family.

The protein is Tetratricopeptide repeat protein 38 (ttc38) of Xenopus tropicalis (Western clawed frog).